We begin with the raw amino-acid sequence, 517 residues long: Putative ribose/galactose/methyl galactoside import ATP-binding protein 1 (517 aa).

ABC transporter domains lie at 23-258 (LQLQ…VGRP) and 269-515 (TPTD…SGRS). 55–62 (GENGAGKS) serves as a coordination point for ATP.

This sequence belongs to the ABC transporter superfamily. Carbohydrate importer 2 (CUT2) (TC 3.A.1.2) family.

It is found in the cell inner membrane. The catalysed reaction is D-ribose(out) + ATP + H2O = D-ribose(in) + ADP + phosphate + H(+). It catalyses the reaction D-galactose(out) + ATP + H2O = D-galactose(in) + ADP + phosphate + H(+). Part of an ABC transporter complex involved in carbohydrate import. Could be involved in ribose, galactose and/or methyl galactoside import. Responsible for energy coupling to the transport system. This chain is Putative ribose/galactose/methyl galactoside import ATP-binding protein 1, found in Burkholderia ambifaria (strain ATCC BAA-244 / DSM 16087 / CCUG 44356 / LMG 19182 / AMMD) (Burkholderia cepacia (strain AMMD)).